Consider the following 478-residue polypeptide: Transposase for insertion sequence element IS231D (478 aa).

The protein belongs to the transposase 11 family.

Its function is as follows. Involved in the transposition of the insertion sequence. The chain is Transposase for insertion sequence element IS231D from Bacillus thuringiensis subsp. finitimus.